We begin with the raw amino-acid sequence, 347 residues long: S-adenosylmethionine:tRNA ribosyltransferase-isomerase (347 aa).

It belongs to the QueA family. As to quaternary structure, monomer.

It localises to the cytoplasm. The catalysed reaction is 7-aminomethyl-7-carbaguanosine(34) in tRNA + S-adenosyl-L-methionine = epoxyqueuosine(34) in tRNA + adenine + L-methionine + 2 H(+). It functions in the pathway tRNA modification; tRNA-queuosine biosynthesis. Functionally, transfers and isomerizes the ribose moiety from AdoMet to the 7-aminomethyl group of 7-deazaguanine (preQ1-tRNA) to give epoxyqueuosine (oQ-tRNA). The polypeptide is S-adenosylmethionine:tRNA ribosyltransferase-isomerase (Exiguobacterium sibiricum (strain DSM 17290 / CCUG 55495 / CIP 109462 / JCM 13490 / 255-15)).